A 417-amino-acid polypeptide reads, in one-letter code: Putative F-box protein At3g58950 (417 aa).

The F-box domain occupies 1–53; the sequence is MDLFSSLPDEVLCHILSFLTTKEAALASVVSKRWRNQFALVPNLDIDEEGKRE.

This is Putative F-box protein At3g58950 from Arabidopsis thaliana (Mouse-ear cress).